Reading from the N-terminus, the 191-residue chain is Putative glutathione-dependent formaldehyde-activating enzyme (191 aa).

Residues 20–166 enclose the CENP-V/GFA domain; the sequence is FAGGNLYCKC…FKAVGLETYD (147 aa). Residues Cys-27, Cys-29, Cys-48, Cys-50, Cys-53, Cys-95, and Cys-98 each coordinate Zn(2+).

Belongs to the Gfa family. Requires Zn(2+) as cofactor.

It catalyses the reaction S-(hydroxymethyl)glutathione = glutathione + formaldehyde. It functions in the pathway one-carbon metabolism; formaldehyde degradation; formate from formaldehyde (glutathione route): step 1/3. Functionally, catalyzes the condensation of formaldehyde and glutathione to S-hydroxymethylglutathione. The polypeptide is Putative glutathione-dependent formaldehyde-activating enzyme (Aspergillus terreus (strain NIH 2624 / FGSC A1156)).